A 486-amino-acid chain; its full sequence is Beta-barrel assembly-enhancing protease (486 aa).

The signal sequence occupies residues 1–19 (MIATLLSSLLLTGPISAGA). His-134 is a binding site for Zn(2+). Glu-135 is a catalytic residue. Positions 138 and 199 each coordinate Zn(2+). Residue Asp-203 is the Proton donor of the active site.

This sequence belongs to the peptidase M48 family. BepA subfamily. It depends on Zn(2+) as a cofactor.

The protein resides in the periplasm. In terms of biological role, functions both as a chaperone and a metalloprotease. Maintains the integrity of the outer membrane by promoting either the assembly or the elimination of outer membrane proteins, depending on their folding state. The protein is Beta-barrel assembly-enhancing protease of Yersinia pestis.